Here is a 172-residue protein sequence, read N- to C-terminus: WW domain binding protein VOPP1 (172 aa).

A signal peptide spans 1–22 (MRRQPAKVAALLLGLLLECTEA). Topologically, residues 23–60 (KKHCWYFEGLYPTYYICRSYEDCCGSRCCVRALSIQRL) are extracellular. The helical transmembrane segment at 61-81 (WYFWFLLMMGVLFCCGAGFFI) threads the bilayer. Residues 82 to 172 (RRRMYPPPLI…PPYEQVVKAK (91 aa)) are Cytoplasmic-facing. Residues 102–153 (RQPPNPGPGAQQPGPPYYTDPGGPGMNPVGNSMAMAFQVPPNSPQGSVACPP) are disordered. Residues 104–119 (PPNPGPGAQQPGPPYY) are compositionally biased toward pro residues.

This sequence belongs to the VOPP1/ECOP family. Interacts with WWOX (via WW domain). In terms of tissue distribution, widely expressed with highest levels in thymus and ovary.

It localises to the cytoplasmic vesicle membrane. Its subcellular location is the late endosome membrane. The protein localises to the lysosome membrane. Functionally, increases the transcriptional activity of NFKB1 by facilitating its nuclear translocation, DNA-binding and associated apoptotic response, when overexpressed. May sequester WWOX in lysosomal vesicles and thereby regulate WWOX role as tumor suppressor. This Homo sapiens (Human) protein is WW domain binding protein VOPP1.